Consider the following 483-residue polypeptide: L-2-hydroxyglutarate dehydrogenase, mitochondrial (483 aa).

A mitochondrion-targeting transit peptide spans 1–67; the sequence is MKHKPETAAF…VDASKTIVRG (67 aa).

It belongs to the L2HGDH family. The cofactor is FAD.

The protein resides in the mitochondrion. It carries out the reaction (S)-2-hydroxyglutarate + A = 2-oxoglutarate + AH2. In terms of biological role, catalyzes the oxidation of (S)-2-hydroxyglutarate to 2-oxoglutarate. Is specific for the (S) enantiomer and possesses very poor activity toward (R)-2-hydroxyglutarate. Has no activity toward related 2-hydroxy acids, such as glycolate, L-lactate or D-lactate. This chain is L-2-hydroxyglutarate dehydrogenase, mitochondrial, found in Arabidopsis thaliana (Mouse-ear cress).